The sequence spans 302 residues: tRNA dimethylallyltransferase (302 aa).

Residue 21-28 (GPTASGKS) participates in ATP binding. Position 23–28 (23–28 (TASGKS)) interacts with substrate.

Belongs to the IPP transferase family. In terms of assembly, monomer. It depends on Mg(2+) as a cofactor.

The enzyme catalyses adenosine(37) in tRNA + dimethylallyl diphosphate = N(6)-dimethylallyladenosine(37) in tRNA + diphosphate. Its function is as follows. Catalyzes the transfer of a dimethylallyl group onto the adenine at position 37 in tRNAs that read codons beginning with uridine, leading to the formation of N6-(dimethylallyl)adenosine (i(6)A). This Paracoccus denitrificans (strain Pd 1222) protein is tRNA dimethylallyltransferase.